We begin with the raw amino-acid sequence, 176 residues long: Large ribosomal subunit protein uL6 (176 aa).

Positions 151–170 (RPPEPYKGKGVRYADEQVRR) are enriched in basic and acidic residues. Positions 151-176 (RPPEPYKGKGVRYADEQVRRKEAKKK) are disordered.

This sequence belongs to the universal ribosomal protein uL6 family. Part of the 50S ribosomal subunit.

This protein binds to the 23S rRNA, and is important in its secondary structure. It is located near the subunit interface in the base of the L7/L12 stalk, and near the tRNA binding site of the peptidyltransferase center. This Shewanella pealeana (strain ATCC 700345 / ANG-SQ1) protein is Large ribosomal subunit protein uL6.